A 442-amino-acid polypeptide reads, in one-letter code: 4-alpha-glucanotransferase (442 aa).

Residues Asp-13, Asn-15, Asp-17, Val-19, and Asp-21 each contribute to the Ca(2+) site. The active-site Nucleophile is the Asp-186. Catalysis depends on Glu-216, which acts as the Proton donor.

It belongs to the glycosyl hydrolase 13 family. Monomer. Ca(2+) serves as cofactor.

Its subcellular location is the cytoplasm. The catalysed reaction is Transfers a segment of a (1-&gt;4)-alpha-D-glucan to a new position in an acceptor, which may be glucose or a (1-&gt;4)-alpha-D-glucan.. In terms of biological role, hydrolyzes the 1,4-alpha-glycoside bonds in oligomeric and polymeric 1,4-alpha-glucans and transfers oligosaccharides (maltotriose being the shortest one) to acceptor maltodextrins. This chain is 4-alpha-glucanotransferase (mgtA), found in Thermotoga neapolitana.